The following is a 307-amino-acid chain: 4-hydroxythreonine-4-phosphate dehydrogenase (307 aa).

Substrate-binding residues include H121 and T122. A divalent metal cation is bound by residues H150, H189, and H245. Positions 253, 262, and 271 each coordinate substrate.

Belongs to the PdxA family. Homodimer. Zn(2+) is required as a cofactor. It depends on Mg(2+) as a cofactor. Co(2+) serves as cofactor.

It is found in the cytoplasm. The catalysed reaction is 4-(phosphooxy)-L-threonine + NAD(+) = 3-amino-2-oxopropyl phosphate + CO2 + NADH. The protein operates within cofactor biosynthesis; pyridoxine 5'-phosphate biosynthesis; pyridoxine 5'-phosphate from D-erythrose 4-phosphate: step 4/5. In terms of biological role, catalyzes the NAD(P)-dependent oxidation of 4-(phosphooxy)-L-threonine (HTP) into 2-amino-3-oxo-4-(phosphooxy)butyric acid which spontaneously decarboxylates to form 3-amino-2-oxopropyl phosphate (AHAP). The protein is 4-hydroxythreonine-4-phosphate dehydrogenase of Sulfurimonas denitrificans (strain ATCC 33889 / DSM 1251) (Thiomicrospira denitrificans (strain ATCC 33889 / DSM 1251)).